The primary structure comprises 434 residues: Methylenetetrahydrofolate--tRNA-(uracil-5-)-methyltransferase TrmFO (434 aa).

10–15 (GAGLAG) contributes to the FAD binding site.

The protein belongs to the MnmG family. TrmFO subfamily. It depends on FAD as a cofactor.

Its subcellular location is the cytoplasm. It catalyses the reaction uridine(54) in tRNA + (6R)-5,10-methylene-5,6,7,8-tetrahydrofolate + NADH + H(+) = 5-methyluridine(54) in tRNA + (6S)-5,6,7,8-tetrahydrofolate + NAD(+). The enzyme catalyses uridine(54) in tRNA + (6R)-5,10-methylene-5,6,7,8-tetrahydrofolate + NADPH + H(+) = 5-methyluridine(54) in tRNA + (6S)-5,6,7,8-tetrahydrofolate + NADP(+). Its function is as follows. Catalyzes the folate-dependent formation of 5-methyl-uridine at position 54 (M-5-U54) in all tRNAs. This is Methylenetetrahydrofolate--tRNA-(uracil-5-)-methyltransferase TrmFO from Bacillus cereus (strain AH820).